The chain runs to 1616 residues: DNA (cytosine-5)-methyltransferase 1 (1616 aa).

Residues 1–120 (MPARTAPARV…NQARSEARRV (120 aa)) form an interaction with DMAP1 region. The interaction with DNMT3A stretch occupies residues 1–148 (MPARTAPARV…RRSKSDGEAK (148 aa)). 2 interaction with the PRC2/EED-EZH2 complex regions span residues 1–336 (MPAR…TEKK) and 308–606 (NPQI…TIRH). The DMAP1-binding domain occupies 16 to 109 (PAISLPDDVR…NREVNGRLEN (94 aa)). K70 bears the N6,N6-dimethyllysine mark. A disordered region spans residues 103–349 (VNGRLENGNQ…AKTVMNSKTH (247 aa)). S127 and S133 each carry phosphoserine. At T137 the chain carries Phosphothreonine. S141 carries the post-translational modification Phosphoserine. An N6-methyllysine; by SETD7 modification is found at K142. Phosphoserine; by PKB/AKT1 is present on S143. The tract at residues 149-217 (PEPSPSPRIT…TSRERVARPL (69 aa)) is interaction with DNMT3B. A phosphoserine mark is found at S152 and S154. Position 160 is an N6-acetyllysine (K160). The interaction with PCNA stretch occupies residues 163–174 (RQTTITSHFAKG). At T166 the chain carries Phosphothreonine. Residues K173 and K188 each carry the N6-acetyllysine modification. The Nuclear localization signal signature appears at 177–205 (KRKPQEESERAKSDESIKEEDKDQDEKRR). Basic and acidic residues-rich tracts occupy residues 179 to 214 (KPQE…ERVA), 221 to 267 (EPER…REAR), and 281 to 306 (KDEK…EPEK). K259 carries the post-translational modification N6-acetyllysine; alternate. K259 participates in a covalent cross-link: Glycyl lysine isopeptide (Lys-Gly) (interchain with G-Cter in SUMO2); alternate. Residues 310–502 (QISDEKDEDE…PEYAPIFGLM (193 aa)) form a homodimerization region. At S312 the chain carries Phosphoserine. A compositionally biased stretch (basic and acidic residues) spans 321–337 (EEKRRKTTPKEPTEKKM). Positions 331 to 550 (EPTEKKMARA…NLNRFTEDSL (220 aa)) are DNA replication foci-targeting sequence. Residues C353 and C356 each contribute to the Zn(2+) site. N6-acetyllysine is present on K366. S394 and S398 each carry phosphoserine. Zn(2+) contacts are provided by C414 and H418. Residues S509 and S549 each carry the phosphoserine modification. The CXXC-type zinc-finger motif lies at 646 to 692 (NAFKRRRCGVCEVCQQPECGKCKACKDMVKFGGSGRSKQACQERRCP). The interval 651–697 (RRCGVCEVCQQPECGKCKACKDMVKFGGSGRSKQACQERRCPNMAMK) is required for activity. Residues C653, C656, C659, C664, C667, C670, C686, and C691 each contribute to the Zn(2+) site. The tract at residues 693 to 754 (NMAMKEADDD…SYYKKVCIDA (62 aa)) is autoinhibitory linker. Positions 699–709 (ADDDEEVDDNI) are enriched in acidic residues. The interval 699 to 729 (ADDDEEVDDNIPEMPSPKKMHQGKKKKQNKN) is disordered. S714 carries the phosphoserine modification. Positions 716–728 (KKMHQGKKKKQNK) are enriched in basic residues. S732 bears the Phosphoserine mark. Residue K749 is modified to N6-acetyllysine. Positions 755-880 (ETLEVGDCVS…QDYARFESPP (126 aa)) constitute a BAH 1 domain. Residue S878 is modified to Phosphoserine. N6-acetyllysine is present on residues K891, K957, K961, K975, and K1054. In terms of domain architecture, BAH 2 spans 972-1100 (HYRKYSDYIK…AKSKSFEDPP (129 aa)). Residues 1095 to 1130 (SFEDPPNHARSPGNKGKGKGKGKGKPKSQACEPSEP) are disordered. 5 consecutive repeat copies span residues 1109 to 1110 (KG), 1111 to 1112 (KG), 1113 to 1114 (KG), 1115 to 1116 (KG), and 1117 to 1118 (KG). A 6 X 2 AA tandem repeats of K-G region spans residues 1109 to 1120 (KGKGKGKGKGKP). Positions 1110 to 1120 (GKGKGKGKGKP) are enriched in basic residues. N6-acetyllysine is present on residues K1111, K1113, and K1115. K1117 is subject to N6-acetyllysine; by EHMT2. 2 positions are modified to N6-acetyllysine: K1119 and K1121. Residues 1119–1120 (KP) form a 6; approximate repeat. The interaction with the PRC2/EED-EZH2 complex stretch occupies residues 1121–1616 (KSQACEPSEP…KIKEEEAAKD (496 aa)). An SAM-dependent MTase C5-type domain is found at 1139-1599 (LRTLDVFSGC…LEIKLCMLAK (461 aa)). The catalytic stretch occupies residues 1139–1616 (LRTLDVFSGC…KIKEEEAAKD (478 aa)). S-adenosyl-L-methionine-binding positions include S1146, 1150-1151 (GL), 1168-1169 (EM), 1190-1191 (DC), and C1191. Residue C1226 is part of the active site. K1349 and K1415 each carry N6-acetyllysine. S-adenosyl-L-methionine is bound by residues N1578 and V1580. Residue K1609 forms a Glycyl lysine isopeptide (Lys-Gly) (interchain with G-Cter in SUMO2) linkage.

This sequence belongs to the class I-like SAM-binding methyltransferase superfamily. C5-methyltransferase family. Homodimer. Forms a stable complex with E2F1, BB1 and HDAC1. Forms a complex with DMAP1 and HDAC2, with direct interaction. Interacts with the PRC2/EED-EZH2 complex. Probably part of a corepressor complex containing ZNF304, TRIM28, SETDB1 and DNMT1. Interacts with UHRF1; promoting its recruitment to hemimethylated DNA. Interacts with USP7, promoting its deubiquitination. Interacts with PCNA. Interacts with MBD2 and MBD3. Interacts with DNMT3A and DNMT3B. Interacts with UBC9. Interacts with CSNK1D. Interacts with HDAC1. Interacts with BAZ2A/TIP5. Interacts with SIRT7. Interacts with ZNF263; recruited to the SIX3 promoter along with other proteins involved in chromatin modification and transcriptional corepression where it contributes to transcriptional repression. Interacts with L3MBTL3 and DCAF5; the interaction requires DNMT1 methylation at Lys-142 and is necessary to target DNMT1 for ubiquitination by the CRL4-DCAF5 E3 ubiquitin ligase complex and proteasomal degradation. Interacts with PHF20L1; the interaction requires DNMT1 methylation at Lys-142 and protects DNMT1 from ubiquitination and proteasomal degradation. Post-translationally, sumoylated; sumoylation increases activity. Acetylation on multiple lysines, mainly by KAT2B/PCAF, regulates cell cycle G(2)/M transition. Deacetylation of Lys-1349 and Lys-1415 by SIRT1 increases methyltransferase activity. In terms of processing, phosphorylation of Ser-154 by CDKs is important for enzymatic activity and protein stability. Phosphorylation of Ser-143 by AKT1 prevents methylation by SETD7 thereby increasing DNMT1 stability. Post-translationally, methylation at Lys-142 by SETD7 is necessary for the regulation of DNMT1 proteasomal degradation. Ubiquitinated by UHRF1; interaction with USP7 counteracts ubiquitination by UHRF1 by promoting deubiquitination and preventing degradation by the proteasome. Ubiquitous; highly expressed in fetal tissues, heart, kidney, placenta, peripheral blood mononuclear cells, and expressed at lower levels in spleen, lung, brain, small intestine, colon, liver, and skeletal muscle. Isoform 2 is less expressed than isoform 1.

It is found in the nucleus. It carries out the reaction a 2'-deoxycytidine in DNA + S-adenosyl-L-methionine = a 5-methyl-2'-deoxycytidine in DNA + S-adenosyl-L-homocysteine + H(+). Methylates CpG residues. Preferentially methylates hemimethylated DNA. Associates with DNA replication sites in S phase maintaining the methylation pattern in the newly synthesized strand, that is essential for epigenetic inheritance. Associates with chromatin during G2 and M phases to maintain DNA methylation independently of replication. It is responsible for maintaining methylation patterns established in development. DNA methylation is coordinated with methylation of histones. Mediates transcriptional repression by direct binding to HDAC2. In association with DNMT3B and via the recruitment of CTCFL/BORIS, involved in activation of BAG1 gene expression by modulating dimethylation of promoter histone H3 at H3K4 and H3K9. Probably forms a corepressor complex required for activated KRAS-mediated promoter hypermethylation and transcriptional silencing of tumor suppressor genes (TSGs) or other tumor-related genes in colorectal cancer (CRC) cells. Also required to maintain a transcriptionally repressive state of genes in undifferentiated embryonic stem cells (ESCs). Associates at promoter regions of tumor suppressor genes (TSGs) leading to their gene silencing. Promotes tumor growth. The sequence is that of DNA (cytosine-5)-methyltransferase 1 (DNMT1) from Homo sapiens (Human).